The chain runs to 357 residues: tRNA N6-adenosine threonylcarbamoyltransferase (357 aa).

Fe cation is bound by residues His-116 and His-120. Substrate-binding positions include 139–143 (LVSGG), Asp-172, Gly-185, and Asn-284. Asp-312 is a Fe cation binding site.

The protein belongs to the KAE1 / TsaD family. It depends on Fe(2+) as a cofactor.

It localises to the cytoplasm. The enzyme catalyses L-threonylcarbamoyladenylate + adenosine(37) in tRNA = N(6)-L-threonylcarbamoyladenosine(37) in tRNA + AMP + H(+). Required for the formation of a threonylcarbamoyl group on adenosine at position 37 (t(6)A37) in tRNAs that read codons beginning with adenine. Is involved in the transfer of the threonylcarbamoyl moiety of threonylcarbamoyl-AMP (TC-AMP) to the N6 group of A37, together with TsaE and TsaB. TsaD likely plays a direct catalytic role in this reaction. The chain is tRNA N6-adenosine threonylcarbamoyltransferase from Synechococcus sp. (strain CC9902).